A 473-amino-acid chain; its full sequence is Probable glycine dehydrogenase (decarboxylating) subunit 2 (473 aa).

Residue Lys266 is modified to N6-(pyridoxal phosphate)lysine.

It belongs to the GcvP family. C-terminal subunit subfamily. In terms of assembly, the glycine cleavage system is composed of four proteins: P, T, L and H. In this organism, the P 'protein' is a heterodimer of two subunits. Pyridoxal 5'-phosphate is required as a cofactor.

It catalyses the reaction N(6)-[(R)-lipoyl]-L-lysyl-[glycine-cleavage complex H protein] + glycine + H(+) = N(6)-[(R)-S(8)-aminomethyldihydrolipoyl]-L-lysyl-[glycine-cleavage complex H protein] + CO2. The glycine cleavage system catalyzes the degradation of glycine. The P protein binds the alpha-amino group of glycine through its pyridoxal phosphate cofactor; CO(2) is released and the remaining methylamine moiety is then transferred to the lipoamide cofactor of the H protein. This is Probable glycine dehydrogenase (decarboxylating) subunit 2 from Thermus thermophilus (strain ATCC BAA-163 / DSM 7039 / HB27).